The primary structure comprises 539 residues: Chaperonin GroEL (539 aa).

ATP contacts are provided by residues 29–32, 86–90, G413, 476–478, and D492; these read TLGP, DGTTT, and NAA.

This sequence belongs to the chaperonin (HSP60) family. Forms a cylinder of 14 subunits composed of two heptameric rings stacked back-to-back. Interacts with the co-chaperonin GroES.

It is found in the cytoplasm. It carries out the reaction ATP + H2O + a folded polypeptide = ADP + phosphate + an unfolded polypeptide.. Its function is as follows. Together with its co-chaperonin GroES, plays an essential role in assisting protein folding. The GroEL-GroES system forms a nano-cage that allows encapsulation of the non-native substrate proteins and provides a physical environment optimized to promote and accelerate protein folding. In Macrococcus caseolyticus (strain JCSC5402) (Macrococcoides caseolyticum), this protein is Chaperonin GroEL.